The chain runs to 718 residues: Kelch-like protein 4 (718 aa).

A disordered region spans residues 46–69 (TPVQGRLKSHSRDRNGLKKSNSPV). The BTB domain occupies 182-249 (CDVLLIAGHL…AYTGVLQLKE (68 aa)). 6 Kelch repeats span residues 430-476 (ALYA…VIDN), 477-523 (KLYV…TLEG), 525-570 (MYAV…ALNN), 571-617 (KLYA…TYNG), 619-670 (LYVV…PLGD), and 671-717 (KLYV…VVKL).

In terms of tissue distribution, expressed in adult fibroblasts and in a range of fetal tissues including tongue, palate, and mandible.

Its subcellular location is the cytoplasm. The protein localises to the cytoskeleton. The polypeptide is Kelch-like protein 4 (KLHL4) (Homo sapiens (Human)).